The sequence spans 87 residues: Mitochondrial import protein 2 (87 aa).

The Cytoplasmic segment spans residues 1–53 (MADSEDTSVILQGIDTINSVEGLEEDGYLSDEDTSLSNELADAQRQWEESLQQ). A helical transmembrane segment spans residues 54–71 (LNKLLNWVLLPLLGKYIG). Topologically, residues 72 to 87 (RRMAKTLWSRFIEHFV) are mitochondrial intermembrane.

It belongs to the MIM2 family. As to quaternary structure, component of the MIM complex containing at least MIM1 and MIM2. Interacts with MIM1; interaction is direct.

It localises to the mitochondrion outer membrane. In terms of biological role, component of the MIM complex required for outer membrane protein import. Involved in import of the subset of proteins with multiple alpha-helical transmembrane segments, including UGO1, TOM20 and FZO1. This chain is Mitochondrial import protein 2, found in Saccharomyces cerevisiae (strain ATCC 204508 / S288c) (Baker's yeast).